The following is a 235-amino-acid chain: uncharacterized protein (235 aa).

Helical transmembrane passes span 167–187 (AFKL…LNEL) and 190–210 (LFAY…LLLW).

The protein localises to the membrane. This is an uncharacterized protein from Saccharomyces cerevisiae (strain ATCC 204508 / S288c) (Baker's yeast).